Reading from the N-terminus, the 295-residue chain is Cyclic dipyrimidine nucleotide synthase CdnE (295 aa).

The segment at 1–25 (MSIDWEQTFRKWSKPSSETESTKAE) is disordered. Residues Gln-51, Ser-53, and Asn-59 each coordinate UTP. Mg(2+)-binding residues include Asp-65 and Asp-67. UTP-binding residues include Asp-67, Asp-124, and Lys-125. 2 residues coordinate Mg(2+): Asp-128 and Asp-139. Residues Asp-139, Asn-173, Lys-201, and Ser-220 each coordinate UTP. The Pyrimidine specificity motif (R/Q)xW in donor pocket signature appears at 274–276 (QMW).

Belongs to the CD-NTase family. E02 subfamily. Mg(2+) serves as cofactor.

It carries out the reaction 2 UTP = c-di-UMP + 2 diphosphate. The enzyme catalyses UTP + CTP = cyclic CMP-UMP + 2 diphosphate. Cyclic nucleotide synthase (second messenger synthase) of a CBASS antivirus system. CBASS (cyclic oligonucleotide-based antiphage signaling system) provides immunity against bacteriophage. The CD-NTase protein synthesizes cyclic nucleotides in response to infection; these serve as specific second messenger signals. The signals activate a diverse range of effectors, leading to bacterial cell death and thus abortive phage infection. A type I-B(UU) CBASS system. In terms of biological role, cyclic dinucleotide synthase that catalyzes the synthesis of 3',3'-cyclic UMP-UMP (c-di-UMP) as the major product, and of 3',3'-cyclic CMP-UMP as a minor product, which are second messengers for cell signal transduction. The protein is Cyclic dipyrimidine nucleotide synthase CdnE of Legionella pneumophila.